The chain runs to 159 residues: Alpha-lactalbumin (159 aa).

The first 19 residues, 1-19, serve as a signal peptide directing secretion; the sequence is MMRFVPLFLACISLPAFQA. Residues 20 to 142 enclose the C-type lysozyme domain; that stretch reads TEFTKCEVSH…KLEQWRCEKP (123 aa). 4 disulfides stabilise this stretch: C25–C139, C47–C130, C80–C96, and C92–C110. N64 is a glycosylation site (N-linked (GlcNAc...) asparagine). Positions 98, 101, 106, and 107 each coordinate Ca(2+).

The protein belongs to the glycosyl hydrolase 22 family. As to quaternary structure, lactose synthase (LS) is a heterodimer of a catalytic component, beta1,4-galactosyltransferase (beta4Gal-T1) and a regulatory component, alpha-lactalbumin (LA). Mammary gland specific. Secreted in milk.

Its subcellular location is the secreted. Functionally, regulatory subunit of lactose synthase, changes the substrate specificity of galactosyltransferase in the mammary gland making glucose a good acceptor substrate for this enzyme. This enables LS to synthesize lactose, the major carbohydrate component of milk. In other tissues, galactosyltransferase transfers galactose onto the N-acetylglucosamine of the oligosaccharide chains in glycoproteins. This Rattus norvegicus (Rat) protein is Alpha-lactalbumin (Lalba).